Reading from the N-terminus, the 61-residue chain is Photosystem II reaction center X protein (61 aa).

A helical transmembrane segment spans residues 26–46 (IGSFIAAALLIVIPATAFLIF).

It belongs to the PsbX family. Type 2 subfamily. PSII consists of a core antenna complex that captures photons, and an electron transfer chain that converts photonic excitation into a charge separation. PSII forms dimeric complexes.

The protein resides in the cellular thylakoid membrane. In terms of biological role, involved in the binding and/or turnover of quinones at the Q(B) site of Photosystem II. The sequence is that of Photosystem II reaction center X protein from Prochlorococcus marinus (strain MIT 9301).